A 115-amino-acid chain; its full sequence is Protamine-2 (115 aa).

Residues 1–115 are disordered; that stretch reads MVRCHVKSPT…RRRRRCGRQL (115 aa). Serine 8 carries the phosphoserine modification. Basic and acidic residues predominate over residues 24–38; the sequence is ETEHPDQARELRPED. 2 stretches are compositionally biased toward basic residues: residues 44-79 and 102-115; these read RTHR…RRRG and RRMR…GRQL.

Belongs to the protamine P2 family. As to quaternary structure, interacts with TDRP. Post-translationally, proteolytic processing into mature chains is required for histone eviction during spermatogenesis. Transition proteins (TNP1 and TNP2) are required for processing. Testis.

It localises to the nucleus. Its subcellular location is the chromosome. Protamines substitute for histones in the chromatin of sperm during the haploid phase of spermatogenesis. They compact sperm DNA into a highly condensed, stable and inactive complex. The protein is Protamine-2 (PRM2) of Bos taurus (Bovine).